The sequence spans 525 residues: Transmembrane protein 184C (525 aa).

Transmembrane regions (helical) follow at residues 17 to 37 (LLVL…IWKF), 48 to 68 (SWFI…WGIL), 83 to 103 (IIRI…ALVY), 121 to 141 (VIYN…PNLI), 212 to 232 (YLVI…LLFY), 254 to 274 (VVFV…LGVI), and 287 to 307 (AVAT…AAIA). Disordered regions lie at residues 358–394 (PKKK…PSPG) and 483–525 (LFPS…STDP). Over residues 373–388 (SSLLSSSSQDLTSGSS) the composition is skewed to low complexity. The segment covering 483–502 (LFPSTETSENSMIDTSESQQ) has biased composition (polar residues). A compositionally biased stretch (low complexity) spans 503–525 (ESSDLCTESSDSSTESSDLSTDP).

This sequence belongs to the TMEM184 family.

Its subcellular location is the membrane. Possible tumor suppressor which may play a role in cell growth. This chain is Transmembrane protein 184C (Tmem184c), found in Mus musculus (Mouse).